We begin with the raw amino-acid sequence, 374 residues long: MTNQNVIVSDRKPILGLKTITVSVSNSPLFSNSFPTYFNFPRRKLLKLLEAADKNNLVVAPKITSMIDSMRDSSPTRLRSSSYDSVSDNDDKTSWIVRFPSALNMFDEIVNAAKGKQIVMFLDYDGTLSPIVEDPDKAFITHEMREVVKDVASNFPTAIVTGRSIEKVRSFVQVNEIYYAGSHGMDIEGPTNENSNGQSNERVLFQPAREFLPMIEKVVNILEEKTKWIPGAMVENNKFCLSVHFRRVDEKRWPALAEVVKSVLIDYPKLKLTQGRKVLEIRPTIKWDKGQALNFLLKSLGYENSDDVVPVYIGDDRTDEDAFKVLRERGQGFGILVSKVPKDTNASYSLQDPSQVNKFLERLVEWKRKTVGEE.

The protein belongs to the trehalose phosphatase family. Requires a divalent metal cation as cofactor. In terms of tissue distribution, expressed in flowers.

The catalysed reaction is alpha,alpha-trehalose 6-phosphate + H2O = alpha,alpha-trehalose + phosphate. The protein operates within glycan biosynthesis; trehalose biosynthesis. In terms of biological role, removes the phosphate from trehalose 6-phosphate to produce free trehalose. Trehalose accumulation in plant may improve abiotic stress tolerance. The sequence is that of Trehalose-phosphate phosphatase B (TPPB) from Arabidopsis thaliana (Mouse-ear cress).